A 129-amino-acid polypeptide reads, in one-letter code: Protein HMF1 (129 aa).

Lys-52 participates in a covalent cross-link: Glycyl lysine isopeptide (Lys-Gly) (interchain with G-Cter in ubiquitin).

This sequence belongs to the RutC family.

Its subcellular location is the cytoplasm. The protein localises to the nucleus. It is found in the mitochondrion intermembrane space. In Saccharomyces cerevisiae (strain ATCC 204508 / S288c) (Baker's yeast), this protein is Protein HMF1 (HMF1).